Reading from the N-terminus, the 127-residue chain is Large ribosomal subunit protein bL17 (127 aa).

This sequence belongs to the bacterial ribosomal protein bL17 family. As to quaternary structure, part of the 50S ribosomal subunit. Contacts protein L32.

This Chromohalobacter salexigens (strain ATCC BAA-138 / DSM 3043 / CIP 106854 / NCIMB 13768 / 1H11) protein is Large ribosomal subunit protein bL17.